Consider the following 466-residue polypeptide: Phytase A (466 aa).

Residues 1–19 (MAVLSVLLPITFLLSSVTG) form the signal peptide. Cys30 and Cys39 are joined by a disulfide. 6 residues coordinate 1D-myo-inositol hexakisphosphate: Gln49, Tyr50, Arg80, His81, Arg84, and Thr87. 4 cysteine pairs are disulfide-bonded: Cys70-Cys413, Cys214-Cys464, Cys263-Cys281, and Cys435-Cys443. His81 serves as the catalytic Nucleophile. N-linked (GlcNAc...) asparagine glycosylation is found at Asn104 and Asn119. Arg164 contacts 1D-myo-inositol hexakisphosphate. Residues Asn206 and Asn219 are each glycosylated (N-linked (GlcNAc...) asparagine). Lys300 contributes to the 1D-myo-inositol hexakisphosphate binding site. 2 N-linked (GlcNAc...) asparagine glycosylation sites follow: Asn338 and Asn351. Residues His360 and Asp361 each contribute to the 1D-myo-inositol hexakisphosphate site. N-linked (GlcNAc...) asparagine glycosylation is present at Asn375.

The protein belongs to the histidine acid phosphatase family. In terms of assembly, monomer.

The protein localises to the secreted. The catalysed reaction is 1D-myo-inositol hexakisphosphate + H2O = 1D-myo-inositol 1,2,4,5,6-pentakisphosphate + phosphate. It catalyses the reaction 1D-myo-inositol 1,2,4,5,6-pentakisphosphate + H2O = 1D-myo-inositol 1,2,5,6-tetrakisphosphate + phosphate. The enzyme catalyses 1D-myo-inositol 1,2,5,6-tetrakisphosphate + H2O = 1D-myo-inositol 1,2,6-trisphosphate + phosphate. It carries out the reaction 1D-myo-inositol 1,2,6-trisphosphate + H2O = 1D-myo-inositol 1,2-bisphosphate + phosphate. The catalysed reaction is 1D-myo-inositol 1,2-bisphosphate + H2O = 1D-myo-inositol 2-phosphate + phosphate. Catalyzes the phosphate monoester hydrolysis of phytic acid (myo-inositol hexakisphosphate), which results in the stepwise formation of myo-inositol pentakis-, tetrakis-, tris-, bis-, and monophosphates, as well as the liberation of inorganic phosphate. Myo-inositol 2-monophosphate is the end product. In Aspergillus oryzae (strain ATCC 42149 / RIB 40) (Yellow koji mold), this protein is Phytase A (phyA).